The chain runs to 612 residues: Indole-3-acetic acid-amido synthetase GH3.5 (612 aa).

It belongs to the IAA-amido conjugating enzyme family.

In terms of biological role, catalyzes the synthesis of indole-3-acetic acid (IAA)-amino acid conjugates, providing a mechanism for the plant to cope with the presence of excess auxin. Strongly reactive with Glu, Gln, Trp, Asp, Ala, Leu, Phe, Gly, Tyr, Met, Ile and Val. Little or no product formation with His, Ser, Thr, Arg, Lys, or Cys. Also active on pyruvic and butyric acid analogs of IAA, PAA and the synthetic auxin naphthaleneacetic acid (NAA). The two chlorinated synthetic auxin herbicides 2,4-D and 3,6-dichloro-o-anisic acid (dicamba) cannot be used as substrates. The polypeptide is Indole-3-acetic acid-amido synthetase GH3.5 (GH3.5) (Arabidopsis thaliana (Mouse-ear cress)).